The primary structure comprises 262 residues: Taurine import ATP-binding protein TauB (262 aa).

The region spanning 4–233 (LELERISAQY…RYAAGESARA (230 aa)) is the ABC transporter domain. 38–45 (GPSGSGKT) serves as a coordination point for ATP.

Belongs to the ABC transporter superfamily. Taurine importer (TC 3.A.1.17.1) family. As to quaternary structure, the complex is composed of two ATP-binding proteins (TauB), two transmembrane proteins (TauC) and a solute-binding protein (TauA).

It is found in the cell inner membrane. It carries out the reaction taurine(out) + ATP + H2O = taurine(in) + ADP + phosphate + H(+). Its function is as follows. Part of the ABC transporter complex TauABC involved in taurine import. Responsible for energy coupling to the transport system. This chain is Taurine import ATP-binding protein TauB, found in Pseudomonas putida (strain ATCC 47054 / DSM 6125 / CFBP 8728 / NCIMB 11950 / KT2440).